Reading from the N-terminus, the 245-residue chain is Carboxymethylenebutenolidase homolog (245 aa).

The residue at position 2 (Ala2) is an N-acetylalanine. Active-site residues include Cys132, Asp179, and His212. Residue Ser223 is modified to Phosphoserine.

Belongs to the dienelactone hydrolase family.

Its subcellular location is the cytoplasm. It is found in the cytosol. Functionally, cysteine hydrolase. The protein is Carboxymethylenebutenolidase homolog (Cmbl) of Rattus norvegicus (Rat).